The chain runs to 352 residues: MGDSSGSRPTWPRRSAACSRNKVGKDCMPDDYSYINTRVRVMRTKLLDGRALDAALASGSYQEFLRVLSETDFAPNMRETTAEGAGLPELDRALSQNLFDTTQRVLGFADGDAKREIETLLMKWDLTNLKTLARGIVSGRGAETIQQNLIPGGTIKPSVLQTASQSTDLASAATALGVGGHPLAKVFRNAVTAYNTTGRLLDLEVLLDQGYYRYATQVSRDTSLRRYLSREIDITNALIARNSRGGTLDTNLFVPGGSLDAAGYGRLGAGDAGGNADITAILEAPSIEDAEVAARTALDRAARSSAVSDVEGVGIILDFLRRKEIEVAKLRLIGRGKYYDLPTDEIRREVQA.

Belongs to the V-ATPase V0D/AC39 subunit family.

In terms of biological role, produces ATP from ADP in the presence of a proton gradient across the membrane. The chain is V-type ATP synthase subunit C (atpC) from Deinococcus radiodurans (strain ATCC 13939 / DSM 20539 / JCM 16871 / CCUG 27074 / LMG 4051 / NBRC 15346 / NCIMB 9279 / VKM B-1422 / R1).